A 1104-amino-acid polypeptide reads, in one-letter code: SWI/SNF complex subunit SMARCC1 (1104 aa).

Residues 27 to 301 are marR-like, BRCT and chromo domains module; the sequence is LAVYRRKDGG…PVSFRQRIST (275 aa). The region spanning 37-163 is the MarR-like domain; sequence PASKFWESPD…IEKTLVQNNC (127 aa). In terms of domain architecture, BRCT; N-terminus spans 167 to 210; the sequence is PNIYLIPDIDLKLANKLKDIIKRHQGTFTDEKSKASHHIYPYPS. A Glycyl lysine isopeptide (Lys-Gly) (interchain with G-Cter in SUMO2) cross-link involves residue K178. One can recognise a Chromo domain in the interval 216-244; that stretch reads EWLRPVMRRDKQVLVHWGFYPDSYDTWVH. The 25-residue stretch at 260–284 folds into the BRCT; C-terminus domain; that stretch reads KPWKVHVKWILDTDVFNEWMNEEDY. The interval 295 to 445 is disordered; it reads FRQRISTKNE…PGEDNVTEQT (151 aa). Basic and acidic residues predominate over residues 301–317; it reads TKNEEPVRSPERRDRKA. Phosphoserine is present on residues S309, S327, and S329. A Phosphothreonine modification is found at T334. K344 and K345 each carry N6-acetyllysine. S349 bears the Phosphoserine mark. At K353 the chain carries N6-acetyllysine. Residue S356 is modified to Phosphoserine. K358 bears the N6-acetyllysine; alternate mark. K358 participates in a covalent cross-link: Glycyl lysine isopeptide (Lys-Gly) (interchain with G-Cter in SUMO2); alternate. The residue at position 397 (T397) is a Phosphothreonine. The 98-residue stretch at 448–545 folds into the SWIRM domain; sequence IIIPSYASWF…YQVDPESRPM (98 aa). S572 carries the phosphoserine modification. K591 is covalently cross-linked (Glycyl lysine isopeptide (Lys-Gly) (interchain with G-Cter in SUMO2)). Residues 617–668 form the SANT domain; it reads SAGREWTEQETLLLLEALEMYKDDWNKVSEHVGSRTQDECILHFLRLPIEDP. Residue K738 forms a Glycyl lysine isopeptide (Lys-Gly) (interchain with G-Cter in SUMO2) linkage. The interval 744–859 is disordered; sequence ARASGKVDPT…DAGKKKVEHE (116 aa). S775 is subject to Phosphoserine. Over residues 775–784 the composition is skewed to acidic residues; that stretch reads SEEEKMETDP. Residues 788–859 show a composition bias toward basic and acidic residues; it reads QPEKAENKVE…DAGKKKVEHE (72 aa). Residue K795 forms a Glycyl lysine isopeptide (Lys-Gly) (interchain with G-Cter in SUMO2) linkage. A phosphoserine mark is found at S821 and S824. Glycyl lysine isopeptide (Lys-Gly) (interchain with G-Cter in SUMO2) cross-links involve residues K828 and K855. A coiled-coil region spans residues 909–945; the sequence is KLRHFEELETIMDREKEALEQQRQQLLTERQNFHMEQ. K947 carries the post-translational modification N6-acetyllysine. Disordered regions lie at residues 955 to 1021 and 1041 to 1104; these read QQME…PGPG and IHPT…SATP. A compositionally biased stretch (low complexity) spans 956–973; that stretch reads QMEQQQQHGQTPQQAHQH. Composition is skewed to pro residues over residues 994-1017 and 1048-1057; these read QQPP…PGQI and PTPPGMPPMP. The residue at position 1064 (R1064) is an Asymmetric dimethylarginine. Pro residues predominate over residues 1073-1104; that stretch reads MYPPPPQQQQPPPPADGVPPPPAPGPPASATP.

The protein belongs to the SMARCC family. As to quaternary structure, component of the multiprotein chromatin-remodeling complexes SWI/SNF: SWI/SNF-A (BAF), SWI/SNF-B (PBAF) and related complexes. The canonical complex contains a catalytic subunit (either SMARCA4/BRG1/BAF190A or SMARCA2/BRM/BAF190B) and at least SMARCE1, ACTL6A/BAF53, SMARCC1/BAF155, SMARCC2/BAF170, and SMARCB1/SNF5/BAF47. Other subunits specific to each of the complexes may also be present permitting several possible combinations developmentally and tissue specific. Component of the BAF complex, which includes at least actin (ACTB), ARID1A/BAF250A, ARID1B/BAF250B, SMARCA2/BRM, SMARCA4/BRG1, ACTL6A/BAF53, ACTL6B/BAF53B, SMARCE1/BAF57, SMARCC1/BAF155, SMARCC2/BAF170, SMARCB1/SNF5/INI1, and one or more SMARCD1/BAF60A, SMARCD2/BAF60B, or SMARCD3/BAF60C. In muscle cells, the BAF complex also contains DPF3. Component of neural progenitors-specific chromatin remodeling complex (npBAF complex) composed of at least, ARID1A/BAF250A or ARID1B/BAF250B, SMARCD1/BAF60A, SMARCD3/BAF60C, SMARCA2/BRM/BAF190B, SMARCA4/BRG1/BAF190A, SMARCB1/BAF47, SMARCC1/BAF155, SMARCE1/BAF57, SMARCC2/BAF170, PHF10/BAF45A, ACTL6A/BAF53A and actin. Component of neuron-specific chromatin remodeling complex (nBAF complex) composed of at least, ARID1A/BAF250A or ARID1B/BAF250B, SMARCD1/BAF60A, SMARCD3/BAF60C, SMARCA2/BRM/BAF190B, SMARCA4/BRG1/BAF190A, SMARCB1/BAF47, SMARCC1/BAF155, SMARCE1/BAF57, SMARCC2/BAF170, DPF1/BAF45B, DPF3/BAF45C, ACTL6B/BAF53B and actin. Component of the SWI/SNF-B (PBAF) chromatin remodeling complex, at least composed of SMARCA4/BRG1, SMARCB1/BAF47/SNF5, ACTL6A/BAF53A or ACTL6B/BAF53B, SMARCE1/BAF57, SMARCD1/BAF60A, SMARCD2/BAF60B, perhaps SMARCD3/BAF60C, SMARCC1/BAF155, SMARCC2/BAF170, PBRM1/BAF180, ARID2/BAF200 and actin. Component of SWI/SNF (GBAF) subcomplex, which includes at least BICRA or BICRAL (mutually exclusive), BRD9, SS18, SMARCA2/BRM, SMARCA4/BRG1/BAF190A, ACTL6A/BAF53, SMARCC1/BAF155, and SMARCD1/BAF60A. May also interact with the SIN3A histone deacetylase transcription repressor complex in conjunction with SMARCA2 and SMARCA4. The minimal complex composed of SMARCC1 and SMARCA4 seems to be able to associate with cyclin such as CCNE1 or transcription factors such as KLF1 or GATA1. Interacts with NR3C1 and SMARD1. Interacts with TRIP12; leading to disrupt interaction between TRIP12 and SMARCE1 and prevent SMARCE1 ubiquitination. Interacts with CEBPB (when not methylated). Interacts with KDM6B. Interacts with MKKS; the interaction takes place predominantly in the cytoplasm and may modulate SMARCC1 location. Interacts with DPF2. Interacts with PRDM1/BLIMP1. Interacts with DPF3a (isoform 2 of DPF3/BAF45C) and with HDGFL2 in a DPF3a-dependent manner. As to expression, highly expressed in adult brain, testis and thymus.

The protein resides in the nucleus. It is found in the cytoplasm. Functionally, involved in transcriptional activation and repression of select genes by chromatin remodeling (alteration of DNA-nucleosome topology). Component of SWI/SNF chromatin remodeling complexes that carry out key enzymatic activities, changing chromatin structure by altering DNA-histone contacts within a nucleosome in an ATP-dependent manner. May stimulate the ATPase activity of the catalytic subunit of the complex. Belongs to the neural progenitors-specific chromatin remodeling complex (npBAF complex) and the neuron-specific chromatin remodeling complex (nBAF complex). During neural development a switch from a stem/progenitor to a postmitotic chromatin remodeling mechanism occurs as neurons exit the cell cycle and become committed to their adult state. The transition from proliferating neural stem/progenitor cells to postmitotic neurons requires a switch in subunit composition of the npBAF and nBAF complexes. As neural progenitors exit mitosis and differentiate into neurons, npBAF complexes which contain ACTL6A/BAF53A and PHF10/BAF45A, are exchanged for homologous alternative ACTL6B/BAF53B and DPF1/BAF45B or DPF3/BAF45C subunits in neuron-specific complexes (nBAF). The npBAF complex is essential for the self-renewal/proliferative capacity of the multipotent neural stem cells. The nBAF complex along with CREST plays a role regulating the activity of genes essential for dendrite growth. The sequence is that of SWI/SNF complex subunit SMARCC1 (Smarcc1) from Mus musculus (Mouse).